We begin with the raw amino-acid sequence, 146 residues long: Holo-[acyl-carrier-protein] synthase (146 aa).

Mg(2+) contacts are provided by Asp-9 and Glu-58.

It belongs to the P-Pant transferase superfamily. AcpS family. Requires Mg(2+) as cofactor.

It localises to the cytoplasm. It carries out the reaction apo-[ACP] + CoA = holo-[ACP] + adenosine 3',5'-bisphosphate + H(+). Transfers the 4'-phosphopantetheine moiety from coenzyme A to a Ser of acyl-carrier-protein. The protein is Holo-[acyl-carrier-protein] synthase of Baumannia cicadellinicola subsp. Homalodisca coagulata.